Consider the following 79-residue polypeptide: Small ribosomal subunit protein bS18B (79 aa).

This sequence belongs to the bacterial ribosomal protein bS18 family. In terms of assembly, part of the 30S ribosomal subunit. Forms a tight heterodimer with protein bS6.

Binds as a heterodimer with protein bS6 to the central domain of the 16S rRNA, where it helps stabilize the platform of the 30S subunit. This is Small ribosomal subunit protein bS18B from Saccharopolyspora erythraea (strain ATCC 11635 / DSM 40517 / JCM 4748 / NBRC 13426 / NCIMB 8594 / NRRL 2338).